The following is a 341-amino-acid chain: Serpentine receptor class alpha-28 (341 aa).

7 consecutive transmembrane segments (helical) span residues 25–45, 57–77, 107–129, 142–162, 188–208, 242–262, and 275–295; these read FIIS…RVLL, LLFS…VIRL, YYYT…LFSF, ASIV…YWVF, VNNI…FLYI, IVIF…SVFI, and LIIS…LIIL.

Belongs to the nematode receptor-like protein sra family.

The protein resides in the membrane. The protein is Serpentine receptor class alpha-28 (sra-28) of Caenorhabditis elegans.